Consider the following 581-residue polypeptide: Protein phosphatase 2C 70 (581 aa).

Topologically, residues 1-7 are extracellular; the sequence is MAMIGMN. The helical transmembrane segment at 8-28 threads the bilayer; the sequence is IIGLFMVLMLLLISLIILFAC. Residues 29–581 are Cytoplasmic-facing; that stretch reads KPWRYFSRFR…IIYLDFDTSL (553 aa). The region spanning 208–259 is the FHA domain; the sequence is VKLGRVSPSDLALKDSEVSGKHAQITWNSTKFKWELVDMGSLNGTLVNSHSI. A PPM-type phosphatase domain is found at 304–577; it reads KIGVASDPMA…DNTSIIYLDF (274 aa). Aspartate 346, glycine 347, aspartate 521, and aspartate 568 together coordinate Mn(2+).

Association of RLK5 with kapp domain is dependent on phosphorylation of RLK5 and can be abolished by dephosphorylation. Interacts with SERK1 and CDC48A. Component of the SERK1 signaling complex, composed of KAPP, CDC48A, GRF6 or GRF7, SERK1, SERK2, SERK3/BAK1 and BRI1. Interacts with CLV1. The cofactor is Mg(2+). Requires Mn(2+) as cofactor. Expressed in all tissues examined.

It localises to the cell membrane. It carries out the reaction O-phospho-L-seryl-[protein] + H2O = L-seryl-[protein] + phosphate. The catalysed reaction is O-phospho-L-threonyl-[protein] + H2O = L-threonyl-[protein] + phosphate. Its function is as follows. Dephosphorylates the Ser/Thr receptor-like kinase RLK5. May function as a signaling component in a pathway involving RLK5. Binds and dephosphorylates CLAVATA1 (CLV1). Functions as a negative regulator of the CLV1 signaling in plant development. Dephosphorylates SERK1 receptor kinase on threonine residues in the A-loop. Dephosphorylation of SERK1 controls SERK1 internalization. Component of a signaling pathway which mediates adaptation to NaCl stress. Is not a component of the SALT OVERLY SENSITIVE (SOS) pathway. This is Protein phosphatase 2C 70 from Arabidopsis thaliana (Mouse-ear cress).